We begin with the raw amino-acid sequence, 566 residues long: MEDSDKENTLLLPNNKYRNQNFIRNQDEDENENENNDNLENDNNKRNYISINNYEPYKEIDNNNNKNNNNNNIINNNNKINFYNNLIPRIKSYFQEIKPFLKYCSFSFLFSFDPSEPYLVDYFTNVLGINQTIVYQEIYPYWTYSYFVFLLIFGILGEIIGYKVIIIIGMVAKILTIGVLLSTNNIIWMILEQITEGLSYSAYTVFLAYIYFSLDTSEYQKMACRVNAGYLVGIVSSGLLGQLLVEQRLPLVYLLSIACGTNILALILALGFSNYKIDQKFSLKEVISDLFGTFKNADIVRWYIWSGIAISIHQIVITYWQNLFLQVNDEQSWNGYISASAYFFASFFAIIPSKLGNKINNIQGIILVLFGLLGGGLLVLMGFGGSTVVSALSFIIYNCCFEFVSPIVNVQIAKKLSSRIGVLFSFNIMVALTIQVLVQSAVGKQFLNLDIKTQFYYYGACLFFLSFGFAILFGFLFLKKKINSNSNSNSNVDVLIVNHNTQNQNSEEKKKKKELYYNANIIDFENNNNNNNNNNNNNNNNNNNNNNNNNNNNNNNVGIGGNDNFK.

A coiled-coil region spans residues 24 to 81 (RNQDEDENENENNDNLENDNNKRNYISINNYEPYKEIDNNNNKNNNNNNIINNNNKIN). The disordered stretch occupies residues 25–46 (NQDEDENENENNDNLENDNNKR). Positions 27 to 40 (DEDENENENNDNLE) are enriched in acidic residues. 11 helical membrane-spanning segments follow: residues 148–168 (VFLL…IIII), 171–191 (VAKI…WMIL), 194–214 (ITEG…YFSL), 226–246 (VNAG…LLVE), 252–272 (VYLL…ALGF), 304–324 (IWSG…QNLF), 332–352 (SWNG…AIIP), 364–384 (GIIL…MGFG), 388–408 (VVSA…SPIV), 420–440 (IGVL…LVQS), and 458–478 (YGAC…FLFL). Residues 517 to 544 (YNANIIDFENNNNNNNNNNNNNNNNNNN) are a coiled coil. Residues 526-556 (NNNNNNNNNNNNNNNNNNNNNNNNNNNNNNN) show a composition bias toward low complexity. Residues 526–566 (NNNNNNNNNNNNNNNNNNNNNNNNNNNNNNNVGIGGNDNFK) form a disordered region.

It belongs to the reduced folate carrier (RFC) transporter (TC 2.A.48) family.

It localises to the membrane. In terms of biological role, folate transporter. The polypeptide is Folate-like transporter DDB_G0272544 (Dictyostelium discoideum (Social amoeba)).